A 530-amino-acid polypeptide reads, in one-letter code: Probable 1,4-beta-D-glucan cellobiohydrolase B (530 aa).

The signal sequence occupies residues 1-26 (MLASTFSYRMYKTALILAALLGSGQA). Residues 27-461 (QQVGTSQAEV…SNIKVGPIGS (435 aa)) form a catalytic region. The active-site Nucleophile is the Glu238. The active-site Proton donor is Glu243. Asn296 is a glycosylation site (N-linked (GlcNAc...) asparagine). The disordered stretch occupies residues 462-492 (TFNSGGSNPGGGTTTTAKPTTTTTTAGSPGG). The ser/Thr-rich linker stretch occupies residues 462 to 494 (TFNSGGSNPGGGTTTTAKPTTTTTTAGSPGGTG). Positions 475 to 488 (TTTAKPTTTTTTAG) are enriched in low complexity. The region spanning 494 to 530 (GVAQHYGQCGGNGWQGPTTCASPYTCQKLNDFYSQCL) is the CBM1 domain. 2 disulfides stabilise this stretch: Cys502-Cys519 and Cys513-Cys529.

It belongs to the glycosyl hydrolase 7 (cellulase C) family.

It localises to the secreted. It carries out the reaction Hydrolysis of (1-&gt;4)-beta-D-glucosidic linkages in cellulose and cellotetraose, releasing cellobiose from the non-reducing ends of the chains.. Functionally, the biological conversion of cellulose to glucose generally requires three types of hydrolytic enzymes: (1) Endoglucanases which cut internal beta-1,4-glucosidic bonds; (2) Exocellobiohydrolases that cut the disaccharide cellobiose from the non-reducing end of the cellulose polymer chain; (3) Beta-1,4-glucosidases which hydrolyze the cellobiose and other short cello-oligosaccharides to glucose. In Neosartorya fischeri (strain ATCC 1020 / DSM 3700 / CBS 544.65 / FGSC A1164 / JCM 1740 / NRRL 181 / WB 181) (Aspergillus fischerianus), this protein is Probable 1,4-beta-D-glucan cellobiohydrolase B (cbhB).